The following is a 191-amino-acid chain: Ferric nitrobindin-like protein (191 aa).

The GXWXGXG motif lies at 20 to 26; sequence GNWAGAG.

Belongs to the nitrobindin family.

The chain is Ferric nitrobindin-like protein from Streptomyces avermitilis (strain ATCC 31267 / DSM 46492 / JCM 5070 / NBRC 14893 / NCIMB 12804 / NRRL 8165 / MA-4680).